A 99-amino-acid chain; its full sequence is Putative pterin-4-alpha-carbinolamine dehydratase (99 aa).

It belongs to the pterin-4-alpha-carbinolamine dehydratase family.

It catalyses the reaction (4aS,6R)-4a-hydroxy-L-erythro-5,6,7,8-tetrahydrobiopterin = (6R)-L-erythro-6,7-dihydrobiopterin + H2O. The chain is Putative pterin-4-alpha-carbinolamine dehydratase from Bradyrhizobium sp. (strain BTAi1 / ATCC BAA-1182).